A 250-amino-acid chain; its full sequence is Ribosome-inactivating protein luffin-B (250 aa).

E160 is a catalytic residue.

It belongs to the ribosome-inactivating protein family. Type 1 RIP subfamily.

It catalyses the reaction Endohydrolysis of the N-glycosidic bond at one specific adenosine on the 28S rRNA.. The chain is Ribosome-inactivating protein luffin-B from Luffa aegyptiaca (Sponge gourd).